The chain runs to 250 residues: 4-hydroxy-tetrahydrodipicolinate reductase (250 aa).

Residues 10 to 15 (GVKGRI), 78 to 80 (GTT), and 105 to 108 (APNF) each bind NAD(+). The active-site Proton donor/acceptor is histidine 135. Position 136 (histidine 136) interacts with (S)-2,3,4,5-tetrahydrodipicolinate. Lysine 139 (proton donor) is an active-site residue. Residue 145 to 146 (GT) coordinates (S)-2,3,4,5-tetrahydrodipicolinate.

This sequence belongs to the DapB family.

Its subcellular location is the cytoplasm. It carries out the reaction (S)-2,3,4,5-tetrahydrodipicolinate + NAD(+) + H2O = (2S,4S)-4-hydroxy-2,3,4,5-tetrahydrodipicolinate + NADH + H(+). The catalysed reaction is (S)-2,3,4,5-tetrahydrodipicolinate + NADP(+) + H2O = (2S,4S)-4-hydroxy-2,3,4,5-tetrahydrodipicolinate + NADPH + H(+). It functions in the pathway amino-acid biosynthesis; L-lysine biosynthesis via DAP pathway; (S)-tetrahydrodipicolinate from L-aspartate: step 4/4. Its function is as follows. Catalyzes the conversion of 4-hydroxy-tetrahydrodipicolinate (HTPA) to tetrahydrodipicolinate. This is 4-hydroxy-tetrahydrodipicolinate reductase from Streptomyces avermitilis (strain ATCC 31267 / DSM 46492 / JCM 5070 / NBRC 14893 / NCIMB 12804 / NRRL 8165 / MA-4680).